Reading from the N-terminus, the 58-residue chain is Apelin receptor early endogenous ligand (58 aa).

The first 22 residues, Met1–Ala22, serve as a signal peptide directing secretion.

It belongs to the Elabela/Toddler family. Interacts with aplnra and aplnrb. Expressed ubiquitously during late blastula and gastrula stages and becomes restricted to the lateral mesoderm, endoderm, and anterior and posterior notochord after gastrulation.

It is found in the secreted. The protein resides in the extracellular space. Peptide hormone that functions as endogenous ligand for the G-protein-coupled apelin receptor (aplnra and/or aplnrb), that plays a role in the regulation of normal cardiovascular function and fluid homeostasis. Functions as a balanced agonist activating both G(i) protein pathway and beta-arrestin pathway of APLNR. Downstream G proteins activation, apelin can inhibit cAMP production and activate key intracellular effectors such as ERKs. On the other hand, APLNR activation induces beta-arrestin recruitment to the membrane leading to desensitization and internalization of the receptor. Required for mesendodermal differentiation, blood vessels formation and heart morphogenesis during early development and for adult cardiovascular homeostasis. Acts as a motogen by promoting mesendodermal cell migration during gastrulation by binding and activating the apelin receptor. Acts as an early embryonic regulator of cellular movement with a role in migration and development of cardiac progenitor cells. May act as a chemoattractant for the activation of angioblast migration toward the embryonic midline, i.e. the position of the future vessel formation, during vasculogenesis. Positively regulates sinus venosus (SV)-derived endothelial cells migration into the developing heart to promote coronary blood vessel sprouting. Involved in cardioprotective functions during heart failure. Mediates myocardial contractility in an ERK1/2-dependent manner. The protein is Apelin receptor early endogenous ligand of Danio rerio (Zebrafish).